The primary structure comprises 372 residues: Probable dual-specificity RNA methyltransferase RlmN (372 aa).

Positions 1–20 are disordered; the sequence is MTSLPLTPVNPDAPARRAAM. E112 serves as the catalytic Proton acceptor. The region spanning 118 to 357 is the Radical SAM core domain; the sequence is YPDRVTVCLS…STTVRDTRGR (240 aa). Residues C125 and C363 are joined by a disulfide bond. [4Fe-4S] cluster-binding residues include C132, C136, and C139. S-adenosyl-L-methionine-binding positions include 187–188, S221, 244–246, and N320; these read GE and SLH. Catalysis depends on C363, which acts as the S-methylcysteine intermediate.

This sequence belongs to the radical SAM superfamily. RlmN family. [4Fe-4S] cluster is required as a cofactor.

It is found in the cytoplasm. The catalysed reaction is adenosine(2503) in 23S rRNA + 2 reduced [2Fe-2S]-[ferredoxin] + 2 S-adenosyl-L-methionine = 2-methyladenosine(2503) in 23S rRNA + 5'-deoxyadenosine + L-methionine + 2 oxidized [2Fe-2S]-[ferredoxin] + S-adenosyl-L-homocysteine. It catalyses the reaction adenosine(37) in tRNA + 2 reduced [2Fe-2S]-[ferredoxin] + 2 S-adenosyl-L-methionine = 2-methyladenosine(37) in tRNA + 5'-deoxyadenosine + L-methionine + 2 oxidized [2Fe-2S]-[ferredoxin] + S-adenosyl-L-homocysteine. Functionally, specifically methylates position 2 of adenine 2503 in 23S rRNA and position 2 of adenine 37 in tRNAs. The chain is Probable dual-specificity RNA methyltransferase RlmN from Salinispora tropica (strain ATCC BAA-916 / DSM 44818 / JCM 13857 / NBRC 105044 / CNB-440).